Here is a 25-residue protein sequence, read N- to C-terminus: Xenoposin precursor fragment BM3 (25 aa).

In terms of tissue distribution, expressed by the skin glands.

Its subcellular location is the secreted. Functionally, antimicrobial peptide. This chain is Xenoposin precursor fragment BM3, found in Xenopus boumbaensis (Mawa clawed frog).